The following is a 218-amino-acid chain: MPMTLGYWDIRGLAHAIRLLLEYTDSSYVEKKYTLGDAPDYDRSQWLNEKFKLGLDFPNLPYLIDGAHKITQSNAILRYIARKHNLCGETEEEKIRVDILENQVMDNHMELVRLCYDPDFEKLKPKYLEELPEKLKLYSEFLGKRPWFAGDKITFVDFLAYDVLDMKRIFEPKCLDAFLNLKDFISRFEGLKKISAYMKSSQFLRGLLFGKSATWNSK.

Residues 2–88 enclose the GST N-terminal domain; that stretch reads PMTLGYWDIR…YIARKHNLCG (87 aa). Glutathione contacts are provided by residues 7 to 8, 46 to 50, 59 to 60, and 72 to 73; these read YW, WLNEK, NL, and QS. The GST C-terminal domain occupies 90-207; that stretch reads TEEEKIRVDI…MKSSQFLRGL (118 aa). Tyr116 serves as a coordination point for substrate.

This sequence belongs to the GST superfamily. Mu family. In terms of assembly, homodimer.

Its subcellular location is the cytoplasm. The catalysed reaction is RX + glutathione = an S-substituted glutathione + a halide anion + H(+). Conjugation of reduced glutathione to a wide number of exogenous and endogenous hydrophobic electrophiles. The sequence is that of Glutathione S-transferase Mu 5 (GSTM5) from Homo sapiens (Human).